A 61-amino-acid chain; its full sequence is Photosystem II reaction center protein K (61 aa).

Residues 1 to 24 (MPNILSLTCICFNSVLCPTSFFFA) constitute a propeptide that is removed on maturation. Residues 32–52 (IFNPIVDVMPVIPVLFFLLAF) form a helical membrane-spanning segment.

Belongs to the PsbK family. In terms of assembly, PSII is composed of 1 copy each of membrane proteins PsbA, PsbB, PsbC, PsbD, PsbE, PsbF, PsbH, PsbI, PsbJ, PsbK, PsbL, PsbM, PsbT, PsbX, PsbY, PsbZ, Psb30/Ycf12, at least 3 peripheral proteins of the oxygen-evolving complex and a large number of cofactors. It forms dimeric complexes.

The protein resides in the plastid. It localises to the chloroplast thylakoid membrane. One of the components of the core complex of photosystem II (PSII). PSII is a light-driven water:plastoquinone oxidoreductase that uses light energy to abstract electrons from H(2)O, generating O(2) and a proton gradient subsequently used for ATP formation. It consists of a core antenna complex that captures photons, and an electron transfer chain that converts photonic excitation into a charge separation. This chain is Photosystem II reaction center protein K, found in Sorghum bicolor (Sorghum).